A 176-amino-acid polypeptide reads, in one-letter code: Flavodoxin 1 (176 aa).

The Flavodoxin-like domain occupies Thr4–Ser165.

It belongs to the flavodoxin family. Requires FMN as cofactor.

In terms of biological role, low-potential electron donor to a number of redox enzymes (Potential). Involved in the reactivation of inactive cob(II)alamin in methionine synthase. This Escherichia coli O157:H7 protein is Flavodoxin 1 (fldA).